The sequence spans 602 residues: UvrABC system protein C (602 aa).

The region spanning 17–94 (TTSGCYKMYS…IKEYKPDYNI (78 aa)) is the GIY-YIG domain. The 36-residue stretch at 199–234 (SKLLDETEIKMKEAIKKEDFEAAIKLKETKRSLIEI) folds into the UVR domain.

It belongs to the UvrC family. In terms of assembly, interacts with UvrB in an incision complex.

Its subcellular location is the cytoplasm. Its function is as follows. The UvrABC repair system catalyzes the recognition and processing of DNA lesions. UvrC both incises the 5' and 3' sides of the lesion. The N-terminal half is responsible for the 3' incision and the C-terminal half is responsible for the 5' incision. The protein is UvrABC system protein C of Borrelia hermsii (strain HS1 / DAH).